The following is a 561-amino-acid chain: Putative transport protein YbjL (561 aa).

Helical transmembrane passes span 8-28 (LLNGNYILLLFVVLALGLCLG), 32-52 (LGSVQLGNSIGVLVVSLLLGQ), 66-86 (FMLFIFCVGVEAGPNFFSIFF), 94-114 (MLALVMVGSALLIALGLGKLF), and 158-178 (NLSLGYALTYLIGLVSLIVGA). RCK C-terminal domains lie at 200-288 (RGLD…SFRN) and 292-373 (VFDR…RIGF). 5 helical membrane-spanning segments follow: residues 383–403 (LLAFCAFFIIGLMIGMITFQF), 406–426 (FSFGIGNAAGLLFAGIMLGFL), 447–467 (FGLMVFMAGVGLSAGSGISNG), 475–495 (MLIAGLVVSLIPVVICFLFGA), and 540–560 (AIANVLLTLAGTLIVIIWPGL).

The protein belongs to the AAE transporter (TC 2.A.81) family. YbjL subfamily.

It localises to the cell membrane. This is Putative transport protein YbjL from Salmonella typhi.